The following is a 279-amino-acid chain: NADH dehydrogenase [ubiquinone] iron-sulfur protein 3, mitochondrial (279 aa).

Residues 1 to 27 constitute a mitochondrion transit peptide; sequence MISRTLLKRSLPTVQFLRPFTRSSIRR. A disordered region spans residues 249–279; the sequence is EPVGEGKDFTPESFKLPTPEPEPEKESDEKK. Positions 270–279 are enriched in basic and acidic residues; sequence EPEKESDEKK.

Belongs to the complex I 30 kDa subunit family. Core subunit of respiratory chain NADH dehydrogenase (Complex I).

It is found in the mitochondrion inner membrane. It catalyses the reaction a ubiquinone + NADH + 5 H(+)(in) = a ubiquinol + NAD(+) + 4 H(+)(out). Core subunit of the mitochondrial membrane respiratory chain NADH dehydrogenase (Complex I) which catalyzes electron transfer from NADH through the respiratory chain, using ubiquinone as an electron acceptor. Plays a role in cell wall integrity and is involved in osmotic and oxidative resistance, yeast to hypha transition and the ability to damage and invade oral epithelial cells. This chain is NADH dehydrogenase [ubiquinone] iron-sulfur protein 3, mitochondrial (ALI1), found in Candida albicans (strain SC5314 / ATCC MYA-2876) (Yeast).